Here is a 127-residue protein sequence, read N- to C-terminus: Calcitonin receptor-stimulating peptide 2 (127 aa).

The N-terminal stretch at 1-25 (MGFWKLSPFLAIGLLVMYQAGILQA) is a signal peptide. Positions 26–81 (APFRSALENPLESATLTEDEICVLLTAVVKDYVQMKARELQQEQETEGSSLTAQKS) are excised as a propeptide. Positions 65 to 85 (LQQEQETEGSSLTAQKSSCKD) are disordered. Residues 72 to 81 (EGSSLTAQKS) are compositionally biased toward polar residues. Cys-83 and Cys-88 are oxidised to a cystine.

The protein belongs to the calcitonin family.

It localises to the secreted. In Canis lupus familiaris (Dog), this protein is Calcitonin receptor-stimulating peptide 2 (CRSP2).